A 345-amino-acid polypeptide reads, in one-letter code: Isocitrate lyase (345 aa).

58–60 (SGY) contributes to the substrate binding site. Asp98 provides a ligand contact to Mg(2+). Cys135 (proton acceptor) is an active-site residue. Substrate is bound by residues 136–137 (GH), Arg170, 230–234 (NYSSS), and Thr260. Residues 318-345 (DPEARRRIEESEGFSEEQADPITSNDDD) form a disordered region. Residues 328–345 (SEGFSEEQADPITSNDDD) are compositionally biased toward acidic residues.

As to quaternary structure, homotetramer or homotrimer. It depends on Mg(2+) as a cofactor.

It carries out the reaction D-threo-isocitrate = glyoxylate + succinate. The protein operates within carbohydrate metabolism; glyoxylate cycle; (S)-malate from isocitrate: step 1/2. In terms of biological role, involved in the metabolic adaptation in response to environmental changes. Catalyzes the reversible formation of succinate and glyoxylate from isocitrate, a key step of the glyoxylate cycle, which operates as an anaplerotic route for replenishing the tricarboxylic acid cycle during growth on fatty acid substrates. This Haloferax volcanii (strain ATCC 29605 / DSM 3757 / JCM 8879 / NBRC 14742 / NCIMB 2012 / VKM B-1768 / DS2) (Halobacterium volcanii) protein is Isocitrate lyase (aceA).